The following is a 78-amino-acid chain: Small ribosomal subunit protein bS18 (78 aa).

Belongs to the bacterial ribosomal protein bS18 family. Part of the 30S ribosomal subunit. Forms a tight heterodimer with protein bS6.

Its function is as follows. Binds as a heterodimer with protein bS6 to the central domain of the 16S rRNA, where it helps stabilize the platform of the 30S subunit. The sequence is that of Small ribosomal subunit protein bS18 from Lactobacillus johnsonii (strain CNCM I-12250 / La1 / NCC 533).